The chain runs to 400 residues: 1-deoxy-D-xylulose 5-phosphate reductoisomerase (400 aa).

Positions 10, 11, 12, 13, 36, 38, and 124 each coordinate NADPH. Lys125 is a binding site for 1-deoxy-D-xylulose 5-phosphate. Position 126 (Glu126) interacts with NADPH. Asp150 contributes to the Mn(2+) binding site. Positions 151, 152, 186, and 209 each coordinate 1-deoxy-D-xylulose 5-phosphate. Glu152 contacts Mn(2+). Gly215 lines the NADPH pocket. Positions 222, 227, 228, and 231 each coordinate 1-deoxy-D-xylulose 5-phosphate. Glu231 is a Mn(2+) binding site.

Belongs to the DXR family. Requires Mg(2+) as cofactor. Mn(2+) is required as a cofactor.

The enzyme catalyses 2-C-methyl-D-erythritol 4-phosphate + NADP(+) = 1-deoxy-D-xylulose 5-phosphate + NADPH + H(+). It functions in the pathway isoprenoid biosynthesis; isopentenyl diphosphate biosynthesis via DXP pathway; isopentenyl diphosphate from 1-deoxy-D-xylulose 5-phosphate: step 1/6. In terms of biological role, catalyzes the NADPH-dependent rearrangement and reduction of 1-deoxy-D-xylulose-5-phosphate (DXP) to 2-C-methyl-D-erythritol 4-phosphate (MEP). This Aliivibrio fischeri (strain ATCC 700601 / ES114) (Vibrio fischeri) protein is 1-deoxy-D-xylulose 5-phosphate reductoisomerase.